Reading from the N-terminus, the 1222-residue chain is ATP-dependent helicase/nuclease subunit A (1222 aa).

Residues 39–495 (QKRTAQQIEA…ILLKENFRSQ (457 aa)) enclose the UvrD-like helicase ATP-binding domain. 60-67 (ASAGSGKT) is a binding site for ATP. The UvrD-like helicase C-terminal domain occupies 524 to 810 (QLIAGSHAQT…NLMTIHKSKG (287 aa)).

The protein belongs to the helicase family. AddA subfamily. In terms of assembly, heterodimer of AddA and AddB/RexB. Mg(2+) serves as cofactor.

The catalysed reaction is Couples ATP hydrolysis with the unwinding of duplex DNA by translocating in the 3'-5' direction.. It catalyses the reaction ATP + H2O = ADP + phosphate + H(+). In terms of biological role, the heterodimer acts as both an ATP-dependent DNA helicase and an ATP-dependent, dual-direction single-stranded exonuclease. Recognizes the chi site generating a DNA molecule suitable for the initiation of homologous recombination. The AddA nuclease domain is required for chi fragment generation; this subunit has the helicase and 3' -&gt; 5' nuclease activities. The polypeptide is ATP-dependent helicase/nuclease subunit A (Streptococcus pyogenes serotype M4 (strain MGAS10750)).